Reading from the N-terminus, the 257-residue chain is NAD-capped RNA hydrolase NudC (257 aa).

Arginine 69 provides a ligand contact to substrate. Residues cysteine 98 and cysteine 101 each coordinate Zn(2+). Substrate is bound at residue glutamate 111. Cysteine 116 and cysteine 119 together coordinate Zn(2+). Tyrosine 124 is a binding site for substrate. One can recognise a Nudix hydrolase domain in the interval 125–248; that stretch reads PQIAPCIIVA…TVARRLIEDT (124 aa). Alanine 158, glutamate 174, and glutamate 178 together coordinate a divalent metal cation. The short motif at 159–180 is the Nudix box element; that stretch reads GFVEVGETLEQAVAREVMEESG. 192-199 contributes to the substrate binding site; it reads QPWPFPQS. Glutamate 219 lines the a divalent metal cation pocket. Substrate is bound at residue alanine 241.

This sequence belongs to the Nudix hydrolase family. NudC subfamily. In terms of assembly, homodimer. Requires Mg(2+) as cofactor. The cofactor is Mn(2+). It depends on Zn(2+) as a cofactor.

It catalyses the reaction a 5'-end NAD(+)-phospho-ribonucleoside in mRNA + H2O = a 5'-end phospho-adenosine-phospho-ribonucleoside in mRNA + beta-nicotinamide D-ribonucleotide + 2 H(+). The catalysed reaction is NAD(+) + H2O = beta-nicotinamide D-ribonucleotide + AMP + 2 H(+). The enzyme catalyses NADH + H2O = reduced beta-nicotinamide D-ribonucleotide + AMP + 2 H(+). Functionally, mRNA decapping enzyme that specifically removes the nicotinamide adenine dinucleotide (NAD) cap from a subset of mRNAs by hydrolyzing the diphosphate linkage to produce nicotinamide mononucleotide (NMN) and 5' monophosphate mRNA. The NAD-cap is present at the 5'-end of some mRNAs and stabilizes RNA against 5'-processing. Has preference for mRNAs with a 5'-end purine. Catalyzes the hydrolysis of a broad range of dinucleotide pyrophosphates. This Klebsiella pneumoniae subsp. pneumoniae (strain ATCC 700721 / MGH 78578) protein is NAD-capped RNA hydrolase NudC.